Here is a 429-residue protein sequence, read N- to C-terminus: Growth/differentiation factor 2 (429 aa).

The first 22 residues, 1–22, serve as a signal peptide directing secretion; that stretch reads MCPGALWVALPLLSLLAGSLQG. The propeptide occupies 23-319; it reads KPLQSWGRGS…AGSTLARRKR (297 aa). Residues Asn71 and Asn136 are each glycosylated (N-linked (GlcNAc...) asparagine). A compositionally biased stretch (basic and acidic residues) spans 283–301; sequence VLKKLSKDGSTEAGESSHE. A disordered region spans residues 283 to 308; it reads VLKKLSKDGSTEAGESSHEEDTDGHV. 3 disulfide bridges follow: Cys327/Cys393, Cys356/Cys426, and Cys360/Cys428. Residues 402–416 are interaction with ENG; sequence SVLYKDDMGVPTLKY.

It belongs to the TGF-beta family. Homodimer; disulfide-linked. Detected in extracellular fluid as mature homodimer, and in complex with its propeptide. Interacts with ACVRL1, BMPR2 and ACVR2B with high affinity (in vitro). Identified in a complex with ACVRL1 and ACVR2B. Has ten times lower affinity for ACVR2A (in vitro). Interacts with ENG, forming a heterotetramer with a 2:2 stoichiometry. Can form a heteromeric complex with ENG and ACVRL1. Interacts with type I receptor ACVR1. A reversible disulfide bond can be formed between the two subunits in the homodimer; this has no effect on GDF2 activity. Detected in blood plasma (at protein level).

Its subcellular location is the secreted. Potent circulating inhibitor of angiogenesis. Signals through the type I activin receptor ACVRL1 but not other Alks. Signaling through SMAD1 in endothelial cells requires TGF-beta coreceptor endoglin/ENG. The chain is Growth/differentiation factor 2 (GDF2) from Homo sapiens (Human).